Here is a 153-residue protein sequence, read N- to C-terminus: Peptidoglycan-associated lipoprotein (153 aa).

The signal sequence occupies residues 1 to 19; it reads MNKFVKSLLVAGSVAALAA. Cys20 is lipidated: N-palmitoyl cysteine. Cys20 carries the S-diacylglycerol cysteine lipid modification. Residues 40–153 form the OmpA-like domain; it reads SVADLQQRYN…SKNRRAVLAY (114 aa). Peptidoglycan binding regions lie at residues 55-56 and 97-101; these read FD and YNIAL.

The protein belongs to the Pal lipoprotein family. In terms of assembly, the Tol-Pal system is composed of five core proteins: the inner membrane proteins TolA, TolQ and TolR, the periplasmic protein TolB and the outer membrane protein Pal. They form a network linking the inner and outer membranes and the peptidoglycan layer.

The protein localises to the cell outer membrane. In terms of biological role, part of the Tol-Pal system, which plays a role in outer membrane invagination during cell division and is important for maintaining outer membrane integrity. The polypeptide is Peptidoglycan-associated lipoprotein (Haemophilus influenzae (strain ATCC 51907 / DSM 11121 / KW20 / Rd)).